Here is a 462-residue protein sequence, read N- to C-terminus: uncharacterized protein (462 aa).

Residues Asp12, His14, Asp48, Asn81, His179, and His202 each coordinate a divalent metal cation. Residues 258-291 (ESAETKAFLNEKEREAEEKLSDAVAELAQDAEVK) adopt a coiled-coil conformation.

Belongs to the metallophosphoesterase superfamily. A divalent metal cation is required as a cofactor.

This is an uncharacterized protein from Bacillus subtilis (strain 168).